Reading from the N-terminus, the 434-residue chain is ATP-dependent protease ATPase subunit HslU (434 aa).

Residues Val-18, 60–65 (GVGKTE), Asp-247, Glu-312, and Arg-384 contribute to the ATP site.

Belongs to the ClpX chaperone family. HslU subfamily. As to quaternary structure, a double ring-shaped homohexamer of HslV is capped on each side by a ring-shaped HslU homohexamer. The assembly of the HslU/HslV complex is dependent on binding of ATP.

It is found in the cytoplasm. Its function is as follows. ATPase subunit of a proteasome-like degradation complex; this subunit has chaperone activity. The binding of ATP and its subsequent hydrolysis by HslU are essential for unfolding of protein substrates subsequently hydrolyzed by HslV. HslU recognizes the N-terminal part of its protein substrates and unfolds these before they are guided to HslV for hydrolysis. This is ATP-dependent protease ATPase subunit HslU from Bradyrhizobium sp. (strain ORS 278).